Reading from the N-terminus, the 327-residue chain is GTPase Obg (327 aa).

In terms of domain architecture, Obg spans His-2–Ile-160. In terms of domain architecture, OBG-type G spans Ala-161 to Arg-326. GTP-binding positions include Gly-167–Ser-174, Phe-192–Phe-196, Asp-213–Gly-216, Asn-280–Asp-283, and Ser-307–Tyr-309. Mg(2+) is bound by residues Ser-174 and Thr-194.

The protein belongs to the TRAFAC class OBG-HflX-like GTPase superfamily. OBG GTPase family. As to quaternary structure, monomer. Requires Mg(2+) as cofactor.

It is found in the cytoplasm. In terms of biological role, an essential GTPase which binds GTP, GDP and possibly (p)ppGpp with moderate affinity, with high nucleotide exchange rates and a fairly low GTP hydrolysis rate. Plays a role in control of the cell cycle, stress response, ribosome biogenesis and in those bacteria that undergo differentiation, in morphogenesis control. The polypeptide is GTPase Obg (Borrelia hermsii (strain HS1 / DAH)).